Consider the following 191-residue polypeptide: MSADLQETPKAGDASLERLEQSVLGFRRLSNQLLAVIVTIGGLGFTLTCLSSYLGRDLLPIGSPSSLLFVPQGLVMGLYGIAGLLLASYLWAMININLGAGSNNFDKASGMVKICRRGYFKLISAEFPLKDVKAVKVEVRDGFNPLRRLSLRVQGRRDITLTRVGQPLPLAQLEQDGAELARFLDVNLEGL.

The next 2 helical transmembrane spans lie at 33 to 53 and 74 to 94; these read LLAV…LSSY and LVMG…WAMI.

The protein belongs to the Ycf4 family.

The protein localises to the cellular thylakoid membrane. In terms of biological role, seems to be required for the assembly of the photosystem I complex. This is Photosystem I assembly protein Ycf4 from Prochlorococcus marinus (strain MIT 9303).